The sequence spans 209 residues: Kynurenine formamidase (209 aa).

A substrate-binding site is contributed by phenylalanine 18. The Zn(2+) site is built by histidine 48, histidine 52, and aspartate 54. Histidine 58 functions as the Proton donor/acceptor in the catalytic mechanism. Zn(2+) is bound by residues histidine 160 and glutamate 172.

This sequence belongs to the Cyclase 1 superfamily. KynB family. As to quaternary structure, homodimer. Zn(2+) is required as a cofactor.

The catalysed reaction is N-formyl-L-kynurenine + H2O = L-kynurenine + formate + H(+). It functions in the pathway amino-acid degradation; L-tryptophan degradation via kynurenine pathway; L-kynurenine from L-tryptophan: step 2/2. Functionally, catalyzes the hydrolysis of N-formyl-L-kynurenine to L-kynurenine, the second step in the kynurenine pathway of tryptophan degradation. The sequence is that of Kynurenine formamidase from Bordetella petrii (strain ATCC BAA-461 / DSM 12804 / CCUG 43448).